We begin with the raw amino-acid sequence, 403 residues long: Ribosomal RNA large subunit methyltransferase I (403 aa).

Residues Y9–F86 form the PUA domain.

It belongs to the methyltransferase superfamily. RlmI family.

The protein localises to the cytoplasm. The enzyme catalyses cytidine(1962) in 23S rRNA + S-adenosyl-L-methionine = 5-methylcytidine(1962) in 23S rRNA + S-adenosyl-L-homocysteine + H(+). Its function is as follows. Specifically methylates the cytosine at position 1962 (m5C1962) of 23S rRNA. This Salmonella gallinarum (strain 287/91 / NCTC 13346) protein is Ribosomal RNA large subunit methyltransferase I.